The following is a 380-amino-acid chain: ATPase ASNA1 homolog (380 aa).

48–55 (KGGVGKTT) lines the ATP pocket. Residue Asp-77 is part of the active site. ATP-binding residues include Glu-248 and Asn-275.

Belongs to the arsA ATPase family. In terms of assembly, homodimer.

Its subcellular location is the cytoplasm. The protein resides in the endoplasmic reticulum. Its function is as follows. ATPase required for the post-translational delivery of tail-anchored (TA) proteins to the endoplasmic reticulum. Recognizes and selectively binds the transmembrane domain of TA proteins in the cytosol. This complex then targets to the endoplasmic reticulum by membrane-bound receptors, where the tail-anchored protein is released for insertion. This process is regulated by ATP binding and hydrolysis. ATP binding drives the homodimer towards the closed dimer state, facilitating recognition of newly synthesized TA membrane proteins. ATP hydrolysis is required for insertion. Subsequently, the homodimer reverts towards the open dimer state, lowering its affinity for the membrane-bound receptor, and returning it to the cytosol to initiate a new round of targeting. The sequence is that of ATPase ASNA1 homolog from Plasmodium yoelii yoelii.